We begin with the raw amino-acid sequence, 373 residues long: Deoxyguanosinetriphosphate triphosphohydrolase-like protein 1 (373 aa).

Positions Arg-21 to Asp-43 are disordered. Positions Arg-76–Thr-198 constitute an HD domain.

This sequence belongs to the dGTPase family. Type 2 subfamily.

This is Deoxyguanosinetriphosphate triphosphohydrolase-like protein 1 from Deinococcus radiodurans (strain ATCC 13939 / DSM 20539 / JCM 16871 / CCUG 27074 / LMG 4051 / NBRC 15346 / NCIMB 9279 / VKM B-1422 / R1).